The chain runs to 492 residues: GTPase Der (492 aa).

EngA-type G domains follow at residues 3–166 and 205–378; these read PVVA…MDDV and IKLA…DSST. Residues 9–16, 56–60, 118–121, 211–218, 258–262, and 323–326 each bind GTP; these read GRPNVGKS, DTGGI, NKTD, DTAGV, and NKWD. One can recognise a KH-like domain in the interval 379–463; sequence RRVSTALLTR…PIRIQFKEGA (85 aa).

The protein belongs to the TRAFAC class TrmE-Era-EngA-EngB-Septin-like GTPase superfamily. EngA (Der) GTPase family. In terms of assembly, associates with the 50S ribosomal subunit.

Functionally, GTPase that plays an essential role in the late steps of ribosome biogenesis. This is GTPase Der from Cronobacter sakazakii (strain ATCC BAA-894) (Enterobacter sakazakii).